The primary structure comprises 21 residues: Fibrinogen beta chain (21 aa).

Glutamine 1 is modified (pyrrolidone carboxylic acid). Tyrosine 6 carries the post-translational modification Sulfotyrosine.

Heterohexamer; disulfide linked. Contains 2 sets of 3 non-identical chains (alpha, beta and gamma). The 2 heterotrimers are in head to head conformation with the N-termini in a small central domain. Conversion of fibrinogen to fibrin is triggered by thrombin, which cleaves fibrinopeptides A and B from alpha and beta chains, and thus exposes the N-terminal polymerization sites responsible for the formation of the soft clot.

The protein localises to the secreted. In terms of biological role, cleaved by the protease thrombin to yield monomers which, together with fibrinogen alpha (FGA) and fibrinogen gamma (FGG), polymerize to form an insoluble fibrin matrix. Fibrin has a major function in hemostasis as one of the primary components of blood clots. In addition, functions during the early stages of wound repair to stabilize the lesion and guide cell migration during re-epithelialization. Was originally thought to be essential for platelet aggregation, based on in vitro studies using anticoagulated blood. However subsequent studies have shown that it is not absolutely required for thrombus formation in vivo. Enhances expression of SELP in activated platelets. Maternal fibrinogen is essential for successful pregnancy. Fibrin deposition is also associated with infection, where it protects against IFNG-mediated hemorrhage. May also facilitate the antibacterial immune response via both innate and T-cell mediated pathways. This Rangifer tarandus (Reindeer) protein is Fibrinogen beta chain (FGB).